A 763-amino-acid chain; its full sequence is Amine oxidase [copper-containing] 3 (763 aa).

Topologically, residues 2 to 6 (TQKTT) are cytoplasmic. Residues 7-27 (LVLLALAVITIFALVCVLLAG) traverse the membrane as a helical; Signal-anchor for type II membrane protein segment. The Extracellular portion of the chain corresponds to 28 to 763 (RSGDGGRLSQ…AFSHGGFTYK (736 aa)). Asn137 carries an N-linked (GlcNAc...) asparagine glycan. A disulfide bond links Cys198 and Cys199. N-linked (GlcNAc...) asparagine glycans are attached at residues Asn232 and Asn294. The active-site Proton acceptor is the Asp386. Residues Cys404 and Cys430 are joined by a disulfide bond. Tyr471 serves as the catalytic Schiff-base intermediate with substrate; via topaquinone. Tyr471 carries the post-translational modification 2',4',5'-topaquinone. Cu(2+) is bound by residues His520 and His522. Ca(2+)-binding residues include Asp529, Leu530, Asp531, and Glu572. Asn581 and Asn592 each carry an N-linked (GlcNAc...) asparagine glycan. Ca(2+) contacts are provided by Glu641 and Phe663. Residue Asn666 is glycosylated (N-linked (GlcNAc...) asparagine). Residues Glu667, Asp673, and Leu674 each contribute to the Ca(2+) site. His684 is a binding site for Cu(2+). The cysteines at positions 734 and 741 are disulfide-linked.

This sequence belongs to the copper/topaquinone oxidase family. Homodimer; disulfide-linked. Probably forms heterodimers with AOC2. It depends on Cu(2+) as a cofactor. Ca(2+) is required as a cofactor. The cofactor is L-topaquinone. Post-translationally, topaquinone (TPQ) is generated by copper-dependent autoxidation of a specific tyrosyl residue. In terms of processing, N- and O-glycosylated. As to expression, highly expressed in adipocytes, aorta and lung. Expressed at lower levels in heart, kidney, large intestine, liver, small intestine and stomach.

The protein resides in the cell membrane. It catalyses the reaction methylamine + O2 + H2O = formaldehyde + H2O2 + NH4(+). The catalysed reaction is benzylamine + O2 + H2O = benzaldehyde + H2O2 + NH4(+). The enzyme catalyses 2-phenylethylamine + O2 + H2O = 2-phenylacetaldehyde + H2O2 + NH4(+). Functionally, catalyzes the oxidative deamination of primary amines to the corresponding aldehydes with the concomitant production of hydrogen peroxide and ammonia. Has a preference for the primary monoamines methylamine and benzylamine. Could also act on 2-phenylethylamine but much less efficiently. At endothelial cells surface can also function as a cell adhesion protein that participates in lymphocyte extravasation and recirculation by mediating the binding of lymphocytes to peripheral lymph node vascular endothelial cells in an L-selectin-independent fashion. The sequence is that of Amine oxidase [copper-containing] 3 from Rattus norvegicus (Rat).